A 541-amino-acid chain; its full sequence is Carboxypeptidase Y homolog A (541 aa).

The first 17 residues, 1–17, serve as a signal peptide directing secretion; that stretch reads MKLLMTGLLASAAVAAA. The propeptide occupies 18 to 122; it reads QEQQVLQAEG…KLQSYDLRVK (105 aa). Cystine bridges form between cysteine 177/cysteine 417, cysteine 311/cysteine 325, cysteine 335/cysteine 358, cysteine 342/cysteine 351, and cysteine 380/cysteine 387. An N-linked (GlcNAc...) asparagine glycan is attached at asparagine 208. Serine 264 is a catalytic residue. Aspartate 456 is a catalytic residue. A glycan (N-linked (GlcNAc...) asparagine) is linked at asparagine 507. The active site involves histidine 518.

This sequence belongs to the peptidase S10 family.

It localises to the vacuole. The catalysed reaction is Release of a C-terminal amino acid with broad specificity.. Functionally, vacuolar carboxypeptidase involved in degradation of small peptides. Digests preferentially peptides containing an aliphatic or hydrophobic residue in P1' position, as well as methionine, leucine or phenylalanine in P1 position of ester substrate. This is Carboxypeptidase Y homolog A (CPYA) from Arthroderma otae (strain ATCC MYA-4605 / CBS 113480) (Microsporum canis).